The primary structure comprises 92 residues: Small ribosomal subunit protein uS19 (92 aa).

This sequence belongs to the universal ribosomal protein uS19 family.

Functionally, protein S19 forms a complex with S13 that binds strongly to the 16S ribosomal RNA. The chain is Small ribosomal subunit protein uS19 from Acholeplasma laidlawii (strain PG-8A).